A 322-amino-acid polypeptide reads, in one-letter code: MTTANDRPEEASKLSTEELLERIVALKKELNAVILAHYYTVPEVQQAADIVGDSLALARAAEDNSADVIVFAGVYFMAETAKILNPGKLVLMPDDHAGCPLADSCPEAEFRAFREQHPDAIAITYINSTAAIKALSDITCTSSNAAHIVEQIPPEQKIIFGPDRNLGTWLSKKLDRDMILWQGYCYVHDAYSEVYMIQAMAKYPDAELIAHPECRDEVLRHASFVGSTAALLDYTVKSPSQSFIVATEPGILYEMEKRSPGKTFIPAPKDPANPRSVCTQMKQNTLEKLYLCMVNRSPEITVDENLREAALKPIKKMLEMSA.

Iminosuccinate contacts are provided by His37 and Ser54. Position 99 (Cys99) interacts with [4Fe-4S] cluster. Iminosuccinate contacts are provided by residues 125-127 and Ser142; that span reads YIN. Position 185 (Cys185) interacts with [4Fe-4S] cluster. Residues 211–213 and Thr228 each bind iminosuccinate; that span reads HPE. Residue Cys278 coordinates [4Fe-4S] cluster.

Belongs to the quinolinate synthase family. Type 2 subfamily. [4Fe-4S] cluster is required as a cofactor.

The protein resides in the cytoplasm. It carries out the reaction iminosuccinate + dihydroxyacetone phosphate = quinolinate + phosphate + 2 H2O + H(+). The protein operates within cofactor biosynthesis; NAD(+) biosynthesis; quinolinate from iminoaspartate: step 1/1. Its function is as follows. Catalyzes the condensation of iminoaspartate with dihydroxyacetone phosphate to form quinolinate. This chain is Quinolinate synthase, found in Chlorobaculum parvum (strain DSM 263 / NCIMB 8327) (Chlorobium vibrioforme subsp. thiosulfatophilum).